Here is a 146-residue protein sequence, read N- to C-terminus: Large-conductance mechanosensitive channel (146 aa).

Helical transmembrane passes span 14–34 (VLDL…VNSL) and 81–101 (GLFL…FLLV).

It belongs to the MscL family. Homopentamer.

The protein localises to the cell membrane. Channel that opens in response to stretch forces in the membrane lipid bilayer. May participate in the regulation of osmotic pressure changes within the cell. The chain is Large-conductance mechanosensitive channel from Symbiobacterium thermophilum (strain DSM 24528 / JCM 14929 / IAM 14863 / T).